A 447-amino-acid polypeptide reads, in one-letter code: ATP-dependent protease ATPase subunit HslU (447 aa).

ATP contacts are provided by residues I18, 60-65 (GVGKTE), D260, E325, and R397.

This sequence belongs to the ClpX chaperone family. HslU subfamily. As to quaternary structure, a double ring-shaped homohexamer of HslV is capped on each side by a ring-shaped HslU homohexamer. The assembly of the HslU/HslV complex is dependent on binding of ATP.

It is found in the cytoplasm. Its function is as follows. ATPase subunit of a proteasome-like degradation complex; this subunit has chaperone activity. The binding of ATP and its subsequent hydrolysis by HslU are essential for unfolding of protein substrates subsequently hydrolyzed by HslV. HslU recognizes the N-terminal part of its protein substrates and unfolds these before they are guided to HslV for hydrolysis. This chain is ATP-dependent protease ATPase subunit HslU, found in Paraburkholderia phymatum (strain DSM 17167 / CIP 108236 / LMG 21445 / STM815) (Burkholderia phymatum).